The following is a 660-amino-acid chain: UPF0603 protein MT2410 (660 aa).

A signal peptide spans 1–26 (MRLVRLLGMVLTILAAGLLLGPPAGA). Residues 162 to 182 (VVLLVTVGIIVIVVAVLLVVM) form a helical membrane-spanning segment. Residues 488 to 567 (DQLTKVDADL…LEAAHDRKSS (80 aa)) adopt a coiled-coil conformation. Residues 605 to 625 (GGNNAGAILGGIIIGDLLSGG) traverse the membrane as a helical segment. The interval 638–660 (FGGSSNAPGSSPDGGFLGGGGRF) is disordered.

It belongs to the UPF0603 family.

Its subcellular location is the cell membrane. Functionally, may play a role in septum formation. The protein is UPF0603 protein MT2410 of Mycobacterium tuberculosis (strain CDC 1551 / Oshkosh).